The sequence spans 164 residues: Prolyl-tRNA editing protein ProX (164 aa).

This sequence belongs to the PRORSD1 family.

It is found in the cytoplasm. In terms of biological role, functions in trans to edit the amino acid moiety from incorrectly charged Ala-tRNA(Pro). Has weak activity on correctly charged tRNA(Ala), tRNA(Gly) as well as tRNA(Cys), tRNA(Met), tRNA(Pro), tRNA(Ser) and tRNA(Leu). In Acetoanaerobium sticklandii (strain ATCC 12662 / DSM 519 / JCM 1433 / CCUG 9281 / NCIMB 10654 / HF) (Clostridium sticklandii), this protein is Prolyl-tRNA editing protein ProX (proX).